Consider the following 237-residue polypeptide: UPF0174 protein YaaW (237 aa).

This sequence belongs to the UPF0174 family.

This is UPF0174 protein YaaW from Escherichia coli O157:H7.